Reading from the N-terminus, the 62-residue chain is Large ribosomal subunit protein bL28 (62 aa).

A disordered region spans residues 1–22; the sequence is MGKQCFVTGRKASTGNRRSHAL.

Belongs to the bacterial ribosomal protein bL28 family.

The sequence is that of Large ribosomal subunit protein bL28 from Staphylococcus aureus (strain N315).